Consider the following 384-residue polypeptide: MEAKDHIERRPDRVSIRRLKLVNFRNYAELSLPLGPGHVVLTGENGSGKTNLIEAISFLSPGRGLRRAAYDDVARANAEGGFAIHAALDCMIYGDAEIGTGTAGGGEGGRKVRINGIAASADDLLDYARILWVVPSMDGLFTGGASDRRRFLDRMVLAIDTAHGKRVLDYEKAMRSRNRLLNDGSNDDQWLDAIENQMAELGTAIAAARAQAMRLIAAMIERLPAEGPFPKADCFLEGALESRIGVEAALDLEEDFRRTLRDGRARDRAAGRTLDGPHRTDLIVQHRPKSMPAALCSTGEQKALLIGLILAHARLTAELSGMAPILLLDEIAAHLDMGRRAALFGILDELGGQAFMTGTDRALFDALAGDAQFFNVSAGQLTGI.

Residue 43-50 (GENGSGKT) participates in ATP binding.

This sequence belongs to the RecF family.

It is found in the cytoplasm. Functionally, the RecF protein is involved in DNA metabolism; it is required for DNA replication and normal SOS inducibility. RecF binds preferentially to single-stranded, linear DNA. It also seems to bind ATP. This Brucella suis biovar 1 (strain 1330) protein is DNA replication and repair protein RecF.